Reading from the N-terminus, the 143-residue chain is Large ribosomal subunit protein uL11 (143 aa).

It belongs to the universal ribosomal protein uL11 family. Part of the ribosomal stalk of the 50S ribosomal subunit. Interacts with L10 and the large rRNA to form the base of the stalk. L10 forms an elongated spine to which L12 dimers bind in a sequential fashion forming a multimeric L10(L12)X complex. In terms of processing, one or more lysine residues are methylated.

In terms of biological role, forms part of the ribosomal stalk which helps the ribosome interact with GTP-bound translation factors. This is Large ribosomal subunit protein uL11 from Clavibacter sepedonicus (Clavibacter michiganensis subsp. sepedonicus).